The primary structure comprises 197 residues: Ion-translocating oxidoreductase complex subunit B (197 aa).

The hydrophobic stretch occupies residues 1–26; that stretch reads MSTILIAIIALAVLAAVFGAILGFAS. Residues 32–90 form the 4Fe-4S domain; sequence EADPIVDQIDTILPQTQCGQCGYPGCRPYAEAIANGDKINKCPPGGQATIEKLADLMGV. [4Fe-4S] cluster is bound by residues C49, C52, C57, C73, C114, C117, C120, C124, C144, C147, C150, and C154. 2 consecutive 4Fe-4S ferredoxin-type domains span residues 105-134 and 135-164; these read TVAFIHEDMCIGCTKCIQACPVDAIVGGTK and ALHTVIKDECTGCDLCVAPCPTDCIEMIPV.

This sequence belongs to the 4Fe4S bacterial-type ferredoxin family. RnfB subfamily. The complex is composed of six subunits: RnfA, RnfB, RnfC, RnfD, RnfE and RnfG. [4Fe-4S] cluster serves as cofactor.

It is found in the cell inner membrane. Part of a membrane-bound complex that couples electron transfer with translocation of ions across the membrane. In Vibrio atlanticus (strain LGP32) (Vibrio splendidus (strain Mel32)), this protein is Ion-translocating oxidoreductase complex subunit B.